The following is a 1190-amino-acid chain: Wings apart-like protein homolog (1190 aa).

2 disordered regions span residues 1–23 (MTSR…FDEV) and 46–82 (QKRP…DESL). The segment at 1–659 (MTSRFGKTYS…ENQEFTDDIE (659 aa)) is mediates interaction with the cohesin complex. Residues 54 to 66 (DIQEIPKKPKVEE) are compositionally biased toward basic and acidic residues. Positions 73-75 (FGF) match the FGF motif 1 motif. Residue Ser77 is modified to Phosphoserine. The residue at position 168 (Lys168) is an N6-acetyllysine. 3 positions are modified to phosphoserine: Ser221, Ser223, and Ser226. Residues 260-286 (LLEMKDDDFKNRLENLNEAIEEDIVQS) are a coiled coil. Phosphoserine is present on residues Ser347 and Ser380. The short motif at 429–431 (FGF) is the FGF motif 2 element. Phosphoserine is present on Ser443. Positions 453–455 (FGF) match the FGF motif 3 motif. 2 positions are modified to phosphoserine: Ser459 and Ser461. The span at 459-469 (SESEDDEDDDC) shows a compositional bias: acidic residues. The disordered stretch occupies residues 459-553 (SESEDDEDDD…SGPKRSPTKA (95 aa)). Positions 494-509 (SNDNSQDSQSGTNNAE) are enriched in polar residues. Positions 531 to 540 (QGDKSKENTR) are enriched in basic and acidic residues. Positions 626–1169 (RREDKELYTV…KKFLSFMNLT (544 aa)) constitute a WAPL domain. Residues 749–782 (ELEQDASSAKLLNEKDMNKIKEKIRRLCETVHNK) are a coiled coil. Ser904 is subject to Phosphoserine.

This sequence belongs to the WAPL family. Interacts with the cohesin complex throughout the cell cycle; interacts with both chromatin-bound and soluble pools of the complex. Interacts with RAD21; the interaction is direct. Interacts with PDS5A; the interaction is direct, cohesin-dependent and competitive with CDCA5/SORORIN. Interacts (via FGF motifs) with PDS5B; the interaction is direct. Interacts with a SMC1 protein (SMC1A or SMC1B) and SMC3. As to quaternary structure, (Microbial infection) Isoform 2 interacts with Epstein-Barr virus EBNA2. In terms of processing, deubiquitinated by USP37; leading to stabilization. As to expression, isoform 1 is highly expressed in uterine cervix tumor. Isoform 2 is widely expressed with a high level in skeletal muscle and heart.

It localises to the nucleus. Its subcellular location is the chromosome. It is found in the cytoplasm. Regulator of sister chromatid cohesion in mitosis which negatively regulates cohesin association with chromatin. Involved in both sister chromatid cohesion during interphase and sister-chromatid resolution during early stages of mitosis. Couples DNA replication to sister chromatid cohesion. Cohesion ensures that chromosome partitioning is accurate in both meiotic and mitotic cells and plays an important role in DNA repair. This chain is Wings apart-like protein homolog, found in Homo sapiens (Human).